Here is a 357-residue protein sequence, read N- to C-terminus: Glutamate 5-kinase (357 aa).

K7 provides a ligand contact to ATP. The substrate site is built by S43, D130, and N142. Residues 162–163 and 205–211 contribute to the ATP site; these read TD and TGGMTTK. One can recognise a PUA domain in the interval 270-341; the sequence is EGELCLDQGA…QALSVVTDAE (72 aa).

This sequence belongs to the glutamate 5-kinase family.

It localises to the cytoplasm. It carries out the reaction L-glutamate + ATP = L-glutamyl 5-phosphate + ADP. Its pathway is amino-acid biosynthesis; L-proline biosynthesis; L-glutamate 5-semialdehyde from L-glutamate: step 1/2. In terms of biological role, catalyzes the transfer of a phosphate group to glutamate to form L-glutamate 5-phosphate. This is Glutamate 5-kinase from Synechococcus sp. (strain CC9902).